The following is a 239-amino-acid chain: tRNA (guanine-N(7)-)-methyltransferase (239 aa).

Residues Glu69, Glu94, Asp121, and Asp144 each coordinate S-adenosyl-L-methionine. Asp144 is an active-site residue. Lys148 provides a ligand contact to substrate. The tract at residues 150-155 (RHNKRR) is interaction with RNA. Substrate contacts are provided by residues Asp180 and 217–220 (TKFE).

This sequence belongs to the class I-like SAM-binding methyltransferase superfamily. TrmB family. Monomer.

It catalyses the reaction guanosine(46) in tRNA + S-adenosyl-L-methionine = N(7)-methylguanosine(46) in tRNA + S-adenosyl-L-homocysteine. It functions in the pathway tRNA modification; N(7)-methylguanine-tRNA biosynthesis. In terms of biological role, catalyzes the formation of N(7)-methylguanine at position 46 (m7G46) in tRNA. The chain is tRNA (guanine-N(7)-)-methyltransferase from Serratia proteamaculans (strain 568).